A 331-amino-acid polypeptide reads, in one-letter code: MDYSTVKQEEVEVVVLDGEEEAAAAAAPVPLPAAMGVGAAVAPFLVKTFEMVEDPATDAVVSWGGAARNSFVVWDPHAFAAGLLPLHFKHANFSSFLRQLNTYGFRKVSADRWEFANEDFLGGQRHLLANIRRRRRGAGTGSTTPRAVNCGGGGGEGEVERLRRDKEALARELARLRRQQQEARAQLLDMERRVRGTERRQEQCTEFLARALRSPDVLDNIARRHAAAVERKKRRMLAAAADDDGLTFEALALAAAADTSHSTGGAVTTDMIWYELLGEEQAEIDIEVDQLVASASAAADTASEAEPWEEMGEEEVQELVQQIDCLASPSS.

The interval 135-160 is disordered; that stretch reads RRGAGTGSTTPRAVNCGGGGGEGEVE. A coiled-coil region spans residues 156–238; that stretch reads EGEVERLRRD…VERKKRRMLA (83 aa). The hydrophobic repeat HR-A/B stretch occupies residues 162–212; that stretch reads LRRDKEALARELARLRRQQQEARAQLLDMERRVRGTERRQEQCTEFLARAL. The Nuclear localization signal motif lies at 230–235; that stretch reads ERKKRR. Positions 246–253 match the Nuclear export signal motif; sequence LTFEALAL. Residues 270-279 carry the AHA1 motif; it reads DMIWYELLGE. Residues 305–313 carry the AHA2 motif; the sequence is AEPWEEMGE.

This sequence belongs to the HSF family. Class A subfamily. In terms of assembly, homotrimer. Post-translationally, exhibits temperature-dependent phosphorylation.

It localises to the cytoplasm. The protein resides in the nucleus. Functionally, transcriptional regulator that specifically binds DNA of heat shock promoter elements (HSE). The chain is Putative heat stress transcription factor A-6a (HSFA6A) from Oryza sativa subsp. japonica (Rice).